The following is a 547-amino-acid chain: Chaperonin GroEL (547 aa).

ATP is bound by residues 30–33, K51, 87–91, G415, 479–481, and D495; these read TLGP, DGTTT, and NAA.

It belongs to the chaperonin (HSP60) family. Forms a cylinder of 14 subunits composed of two heptameric rings stacked back-to-back. Interacts with the co-chaperonin GroES.

Its subcellular location is the cytoplasm. The catalysed reaction is ATP + H2O + a folded polypeptide = ADP + phosphate + an unfolded polypeptide.. Together with its co-chaperonin GroES, plays an essential role in assisting protein folding. The GroEL-GroES system forms a nano-cage that allows encapsulation of the non-native substrate proteins and provides a physical environment optimized to promote and accelerate protein folding. In Acinetobacter baumannii (strain ACICU), this protein is Chaperonin GroEL.